Consider the following 215-residue polypeptide: Probable transaldolase (215 aa).

The active-site Schiff-base intermediate with substrate is lysine 83.

This sequence belongs to the transaldolase family. Type 3B subfamily.

The protein resides in the cytoplasm. It carries out the reaction D-sedoheptulose 7-phosphate + D-glyceraldehyde 3-phosphate = D-erythrose 4-phosphate + beta-D-fructose 6-phosphate. Its pathway is carbohydrate degradation; pentose phosphate pathway; D-glyceraldehyde 3-phosphate and beta-D-fructose 6-phosphate from D-ribose 5-phosphate and D-xylulose 5-phosphate (non-oxidative stage): step 2/3. Its function is as follows. Transaldolase is important for the balance of metabolites in the pentose-phosphate pathway. This chain is Probable transaldolase, found in Bdellovibrio bacteriovorus (strain ATCC 15356 / DSM 50701 / NCIMB 9529 / HD100).